Here is a 562-residue protein sequence, read N- to C-terminus: F-box only protein 33 (562 aa).

In terms of domain architecture, F-box spans 68–114 (AAGAASLPSELIVHIFSFLPAPDRLRASASCSHWRECLFYPALWPQL). Residues 155 to 173 (GGGPGDGGSGGGTDTGTGG) show a composition bias toward gly residues. Residues 155–176 (GGGPGDGGSGGGTDTGTGGEDG) are disordered.

Part of the SCF (SKP1-CUL1-F-box) E3 ubiquitin-protein ligase complex SCF(FBXO33) formed of CUL1, SKP1, RBX1 and FBXO33. Interacts via its N-terminus with YBX1 CSD domain. Directly interacts with SKP1 and CUL1.

Its pathway is protein modification; protein ubiquitination. Functionally, substrate recognition component of a SCF (SKP1-CUL1-F-box protein) E3 ubiquitin-protein ligase complex which mediates the ubiquitination and subsequent proteasomal degradation of target proteins. Probably recognizes and binds to phosphorylated target proteins. Recognizes YBX1. In Mus musculus (Mouse), this protein is F-box only protein 33 (Fbxo33).